The following is a 253-amino-acid chain: 2-succinyl-6-hydroxy-2,4-cyclohexadiene-1-carboxylate synthase (253 aa).

One can recognise an AB hydrolase-1 domain in the interval 11–147 (PWLVCLHGLF…PEALQDWYQQ (137 aa)).

Belongs to the AB hydrolase superfamily. MenH family. As to quaternary structure, monomer.

The catalysed reaction is 5-enolpyruvoyl-6-hydroxy-2-succinyl-cyclohex-3-ene-1-carboxylate = (1R,6R)-6-hydroxy-2-succinyl-cyclohexa-2,4-diene-1-carboxylate + pyruvate. It functions in the pathway quinol/quinone metabolism; 1,4-dihydroxy-2-naphthoate biosynthesis; 1,4-dihydroxy-2-naphthoate from chorismate: step 3/7. Its pathway is quinol/quinone metabolism; menaquinone biosynthesis. In terms of biological role, catalyzes a proton abstraction reaction that results in 2,5-elimination of pyruvate from 2-succinyl-5-enolpyruvyl-6-hydroxy-3-cyclohexene-1-carboxylate (SEPHCHC) and the formation of 2-succinyl-6-hydroxy-2,4-cyclohexadiene-1-carboxylate (SHCHC). This Pectobacterium atrosepticum (strain SCRI 1043 / ATCC BAA-672) (Erwinia carotovora subsp. atroseptica) protein is 2-succinyl-6-hydroxy-2,4-cyclohexadiene-1-carboxylate synthase.